The following is a 353-amino-acid chain: Small ribosomal subunit biogenesis GTPase RsgA (353 aa).

Residues 1-24 (MSKNKLSKGQQRRVKANHQRRLKT) are disordered. Residues 10 to 23 (QQRRVKANHQRRLK) show a composition bias toward basic residues. In terms of domain architecture, CP-type G spans 104-274 (ASVLTRPDFY…VIDSPGVREF (171 aa)). Residues 160 to 163 (NKID) and 214 to 222 (GQSGVGKSS) each bind GTP. Residues Cys-298, Cys-303, His-305, and Cys-311 each contribute to the Zn(2+) site.

Belongs to the TRAFAC class YlqF/YawG GTPase family. RsgA subfamily. As to quaternary structure, monomer. Associates with 30S ribosomal subunit, binds 16S rRNA. Zn(2+) serves as cofactor.

The protein localises to the cytoplasm. Its function is as follows. One of several proteins that assist in the late maturation steps of the functional core of the 30S ribosomal subunit. Helps release RbfA from mature subunits. May play a role in the assembly of ribosomal proteins into the subunit. Circularly permuted GTPase that catalyzes slow GTP hydrolysis, GTPase activity is stimulated by the 30S ribosomal subunit. This chain is Small ribosomal subunit biogenesis GTPase RsgA, found in Klebsiella pneumoniae subsp. pneumoniae (strain ATCC 700721 / MGH 78578).